A 430-amino-acid polypeptide reads, in one-letter code: Alpha-humulene synthase asR6 (430 aa).

The protein belongs to the terpene synthase family. Alpha-humulene synthase eupE subfamily. It depends on Mg(2+) as a cofactor.

The catalysed reaction is (2E,6E)-farnesyl diphosphate = alpha-humulene + diphosphate. The protein operates within secondary metabolite biosynthesis; terpenoid biosynthesis. Alpha-humulene synthase; part of the gene cluster that mediates the biosynthesis of xenovulene A, an unusual meroterpenoid that has potent inhibitory effects on the human gamma-aminobutyrate A (GABAA) benzodiazepine receptor. The first step of xenovulene A biosynthesis is the biosynthesis of 3-methylorcinaldehyde performed by the non-reducing polyketide synthase aspks1. The salicylate hydroxylase asL1 then catalyzes the oxidative dearomatization of 3-methylorcinaldehyde to yield a dearomatized hydroxycyclohexadione. The 2-oxoglutarate-dependent dioxygenase asL3 further catalyzes the oxidative ring expansion to provide the first tropolone metabolite. The cytochrome P450 monooxygenase asR2 allows the synthesis of tropolone hemiacetal. In parallel, a previously unrecognised class of terpene cyclase, asR6, produces alpha-humulene from farnesylpyrophosphate (FPP). The putative Diels-Alderase asR5 probably catalyzes the formation of the tropolone-humulene skeleton by linking humulene and the polyketide moiety. Oxidative-ring contractions catalyzed by asL4 and asL6 then processively remove carbon atoms from the polyketide to yield xenovulene A. The protein is Alpha-humulene synthase asR6 of Sarocladium schorii (Acremonium strictum (strain IMI 501407)).